The chain runs to 35 residues: uncharacterized protein (35 aa).

A signal peptide spans 1 to 18 (MRSLVFVQLSLLSWEIFC).

This is an uncharacterized protein from Saccharomyces cerevisiae (strain ATCC 204508 / S288c) (Baker's yeast).